A 349-amino-acid polypeptide reads, in one-letter code: UDP-N-acetylenolpyruvoylglucosamine reductase (349 aa).

The FAD-binding PCMH-type domain maps to 25-213 (VGPVARRLVT…VEQGERTDPQ (189 aa)). The active site involves Arg165. Residue Ser242 is the Proton donor of the active site. Residue Glu341 is part of the active site.

It belongs to the MurB family. It depends on FAD as a cofactor.

It localises to the cytoplasm. It catalyses the reaction UDP-N-acetyl-alpha-D-muramate + NADP(+) = UDP-N-acetyl-3-O-(1-carboxyvinyl)-alpha-D-glucosamine + NADPH + H(+). It participates in cell wall biogenesis; peptidoglycan biosynthesis. Functionally, cell wall formation. This chain is UDP-N-acetylenolpyruvoylglucosamine reductase, found in Mycolicibacterium gilvum (strain PYR-GCK) (Mycobacterium gilvum (strain PYR-GCK)).